Reading from the N-terminus, the 214-residue chain is Cytochrome b (214 aa).

Helical transmembrane passes span 31-51 (FGSMLLTCLVIQIMTGFFLAF), 75-96 (WIMQNTHAIGASLFFICIYIHI), 111-131 (WVSGTTLLILLMATAFFGYVL), and 176-196 (FFALHFILPFTIISASSIHIL). Histidine 81 and histidine 95 together coordinate heme b. Positions 180 and 194 each coordinate heme b. An a ubiquinone-binding site is contributed by histidine 199.

It belongs to the cytochrome b family. As to quaternary structure, the cytochrome bc1 complex contains 3 respiratory subunits (MT-CYB, CYC1 and UQCRFS1), 2 core proteins (UQCRC1 and UQCRC2) and probably 6 low-molecular weight proteins. Requires heme b as cofactor.

The protein localises to the mitochondrion inner membrane. In terms of biological role, component of the ubiquinol-cytochrome c reductase complex (complex III or cytochrome b-c1 complex) that is part of the mitochondrial respiratory chain. The b-c1 complex mediates electron transfer from ubiquinol to cytochrome c. Contributes to the generation of a proton gradient across the mitochondrial membrane that is then used for ATP synthesis. In Gloydius blomhoffii (Mamushi), this protein is Cytochrome b (MT-CYB).